A 1915-amino-acid polypeptide reads, in one-letter code: MDAESIRLNNENLWAWLVRLLSKNPEWLSAKLRSFLPTMDLDCSYEPSNPEVIHRQLNRLFAQGMATWKSFINDLCFELDVPLDMEIPLVSIWGPRDEFSKQLGAGEESCPGPQLYHGAKRPFQSYGSSPRRKNSKKQQLELAKKYLKLLKTSAQQWHGGVCPGAWLTPHSPQTYIPPVLQWSRATAPLDAQEGATLGDPEAADNIDVSIQDLFSFKAHKGPRVTVLLGKAGMGKTTLAYRLRWRWAQGQLDRFQALFLFEFRQLNMITQLPTLPQLLFDLYLMPESEPDAVFQYLKENAQEVLLIFDGLDEALHADSVGTDNAGSALTLFSELCHGNLLPGCWVMTTSRPGKLPSCVPTEAATVHMWGFDGLRVEKYVTCFFSDLLSQELALKEMRTNARLRGMCAIPALCTVTCFCLRRLLPGSSPGQSAALLPTITQLYLQMVETFSPSETLLDTSILGFGKVALRGLDTGKVVFSVEDISPQLMSFGAVHSLLTSFCIHTRPGHEEIGYAFVHLSLQEFFAALYLMASHTVDKDTLVEYVTLNSHWVLRTKGRLGLSDHLPAFLAGLASHTCHMFLCQLAQQDRAWVGSRQAAVIQVLRKLASRKLTGPKMIELYHCVAETQDLELARFTAQSLPSRLSFHNFPLTHADLAALANILEHRDDPIHLDFDGCPLEPHCPEALVGCGQVENLSFKSRKCGDAFAEALCRSLPTMGSLKTLGLTGSRITAQGISHLIQTLPLCSQLEEVSLHDNQLKDPEVLSLVELLPSLPKLQKLDLSRNSFSRSILLSLVKVAITCPTVRKLQVRELDLIFYLSPVTETATQQSGASDVQGKDSLKEGQSRSLQLRLQKCQLRIRDAEALVELFQKSPQLEEVNLSGNHLEDDGCRLVAEAASQLHIAQKLDLSDNGLSQTGVTYVLKAMSTCGTLEDLHISLLNNTVVLTFAQEPREQEGSCKGRAPLISFVSPVTSELSQRSRRIRLTHCGFLAKHTETLCEALRASCQTHNLDHLDLSDNSLGGKGVILLTELLPGLGPLKSLNLSRNGLSMDAVFSLVQCLSSLQWVFHLDVSLESDCIFLRGAGTSRDALEPKFQTGVQVLELSQRYTSRSFCLQECQLEPTSLTFLCATLEKSPGPLEVQLSCKSLSDDSLKILLQCLPQLPQLSLLQLRHTVLSSRSPFLLADIFNLCPRVRKVTLRSLCHAVLHFDSNEEQEGVCCGFPGCSLSQEHMETLCCALSKCNALSQLDLTDNLLGDIGLRCLLECLPQLPISGWLDLSHNNISQEGILYLLETLPSYPNIQEVSVSLSSEQIFRMCFSKKEGAGTSLRLCECSFSPEQVSKLASSLSQAQQLTELWLTKCHLDLPQLTMLLNLVNRPTGLLGLRLEEPWVDSVSLPALMEVCAQASGCLTELSISEIQRKLWLQLEFPHQEGNSDSMALRLAHCDLETEHSHLMIQLVETYARLQQLSLSQVSFNDNDGTSSKLLQNILLSSCELKSFRLTFSQVSTKSLTHLAFGLGHCHHLEELDFSNNSLREEDTELLMGALQGTCRLKKLHLSFLPLGASSLALLIQGLSRMTLLQDLCLSHNQIGDVGTQCLAAILPKLPELRKFDLSHNQIGDVGTQCLAAILPKLPELRKFNLSHNQIGHVGTQCLAAILPKLPELRKFDLSRNQIGDVGTQCLAAILPKLPELRKFDLSGNRIGPAGGVQLVKSLTHFEHLEEIKLGNNALGEPTALELAQRLPPQLRVLCLPSSHLGPEGALGLAQALEQCPHIEEVSLAENNLAGGVPRFSKRLPLLRQIDLEFCKIEDQAARHLAANLTLFPALEKLLLSGNLLGDEVAAELAQVLPQMGQLKKVNLEWNRITARGAQLLAQGLVQGSCVPVIRLWNNPILNDVAQSLQSQEPRLDFSITDQQTL.

The disordered stretch occupies residues leucine 103–lysine 137. The NACHT domain occupies arginine 223–glutamate 542. Glycine 229–threonine 236 provides a ligand contact to ATP. 27 LRR repeats span residues valine 622–asparagine 646, methionine 716–threonine 740, cysteine 744–serine 771, leucine 772–valine 796, serine 871–glutamine 898, histidine 900–alanine 923, leucine 930–glutamine 953, threonine 1006–glycine 1033, leucine 1034–leucine 1055, glutamate 1138–leucine 1161, proline 1162–aspartate 1184, cysteine 1240–glutamate 1263, leucine 1265–threonine 1292, alanine 1348–asparagine 1371, serine 1481–valine 1504, cysteine 1519–glycine 1542, lysine 1552–methionine 1575, threonine 1576–alanine 1598, leucine 1603–alanine 1626, leucine 1631–alanine 1654, leucine 1659–alanine 1682, leucine 1687–serine 1711, phenylalanine 1715–glutamine 1738, proline 1741–glutamine 1768, cysteine 1769–leucine 1795, phenylalanine 1821–valine 1845, and methionine 1849–glutamine 1872.

This sequence belongs to the NLRP family. Interacts with CHUK and IKBKB; prevents CHUK and IKBKB phosphorylation and inhibits their kinase activity. Interacts with RIGI and IFIH1; blocks the interaction of MAVS to RIGI. In terms of tissue distribution, expressed in spleen, thymus and lung.

It is found in the cytoplasm. Its function is as follows. Probable regulator of the NF-kappa-B and type I interferon signaling pathways. May also regulate the type II interferon signaling pathway. Plays a role in homeostatic control of innate immunity and in antiviral defense mechanisms. The chain is Protein NLRC5 (Nlrc5) from Mus musculus (Mouse).